The primary structure comprises 150 residues: Deoxyuridine 5'-triphosphate nucleotidohydrolase (150 aa).

Substrate-binding positions include 70-72, Asn-83, and 87-89; these read RSG and TID.

Belongs to the dUTPase family. Mg(2+) is required as a cofactor.

The enzyme catalyses dUTP + H2O = dUMP + diphosphate + H(+). The protein operates within pyrimidine metabolism; dUMP biosynthesis; dUMP from dCTP (dUTP route): step 2/2. This enzyme is involved in nucleotide metabolism: it produces dUMP, the immediate precursor of thymidine nucleotides and it decreases the intracellular concentration of dUTP so that uracil cannot be incorporated into DNA. In Desulfotalea psychrophila (strain LSv54 / DSM 12343), this protein is Deoxyuridine 5'-triphosphate nucleotidohydrolase.